Reading from the N-terminus, the 454-residue chain is F-box protein At1g67130 (454 aa).

The F-box domain maps to 4 to 53 (GETLDSIPTDLILDILSRLPTKSIARFHCVSKLWSSMLASQDFTRLFVNR).

In Arabidopsis thaliana (Mouse-ear cress), this protein is F-box protein At1g67130.